Here is a 310-residue protein sequence, read N- to C-terminus: Cytochrome f (310 aa).

The signal sequence occupies residues Met-1 to Ala-23. Tyr-28, Cys-48, Cys-51, and His-52 together coordinate heme. Residues Ile-277–Lys-297 form a helical membrane-spanning segment.

The protein belongs to the cytochrome f family. The 4 large subunits of the cytochrome b6-f complex are cytochrome b6, subunit IV (17 kDa polypeptide, PetD), cytochrome f and the Rieske protein, while the 4 small subunits are PetG, PetL, PetM and PetN. The complex functions as a dimer. Heme serves as cofactor.

It is found in the cellular thylakoid membrane. Its function is as follows. Component of the cytochrome b6-f complex, which mediates electron transfer between photosystem II (PSII) and photosystem I (PSI), cyclic electron flow around PSI, and state transitions. The protein is Cytochrome f of Synechococcus sp. (strain CC9311).